Here is a 191-residue protein sequence, read N- to C-terminus: IMP cyclohydrolase (191 aa).

The protein belongs to the archaeal IMP cyclohydrolase family.

The enzyme catalyses IMP + H2O = 5-formamido-1-(5-phospho-D-ribosyl)imidazole-4-carboxamide. It functions in the pathway purine metabolism; IMP biosynthesis via de novo pathway; IMP from 5-formamido-1-(5-phospho-D-ribosyl)imidazole-4-carboxamide: step 1/1. Functionally, catalyzes the cyclization of 5-formylamidoimidazole-4-carboxamide ribonucleotide to IMP. The polypeptide is IMP cyclohydrolase (Natronomonas pharaonis (strain ATCC 35678 / DSM 2160 / CIP 103997 / JCM 8858 / NBRC 14720 / NCIMB 2260 / Gabara) (Halobacterium pharaonis)).